A 334-amino-acid polypeptide reads, in one-letter code: Thioredoxin reductase (334 aa).

FAD is bound by residues Ser11–Gly14, Thr40–Ala41, Gln45, Asn54, Cys148, Asp294, and Arg301–Ala303. An intrachain disulfide couples Cys145 to Cys148.

The protein belongs to the class-II pyridine nucleotide-disulfide oxidoreductase family. In terms of assembly, homodimer. Requires FAD as cofactor.

It catalyses the reaction [thioredoxin]-dithiol + NADP(+) = [thioredoxin]-disulfide + NADPH + H(+). Its function is as follows. Component of the thioredoxin-thioredoxin reductase system which may be involved in biosynthesis of penicillins and cephalosporins and may be important in determining the thiol-disulfide redox balance. The polypeptide is Thioredoxin reductase (TRR1) (Penicillium chrysogenum (Penicillium notatum)).